The following is a 523-amino-acid chain: Cryptochrome DASH (523 aa).

A Photolyase/cryptochrome alpha/beta domain is found at 6-142 (RVIICLLRND…KYQTFWGSTL (137 aa)). Disordered regions lie at residues 174–211 (RPTF…TDPR) and 486–523 (KPAG…NKDV). Residues 496–510 (RRGKGPSHTPKQHKN) are compositionally biased toward basic residues.

This sequence belongs to the DNA photolyase class-1 family. FAD serves as cofactor. The cofactor is (6R)-5,10-methylene-5,6,7,8-tetrahydrofolate.

May have a photoreceptor function. Has weak cyclobutyl pyrimidine photolyase activity when expressed in E.coli and when tested in vitro. The chain is Cryptochrome DASH (cry-dash) from Xenopus laevis (African clawed frog).